The primary structure comprises 235 residues: Cytidylate kinase (235 aa).

16–24 (GPAASGKST) is a binding site for ATP.

Belongs to the cytidylate kinase family. Type 1 subfamily.

It localises to the cytoplasm. The catalysed reaction is CMP + ATP = CDP + ADP. It catalyses the reaction dCMP + ATP = dCDP + ADP. The polypeptide is Cytidylate kinase (Chloroherpeton thalassium (strain ATCC 35110 / GB-78)).